The following is a 130-amino-acid chain: MPPRKTARPRRRDRKHIESGIAHIKSTFNNTLVTITDKNGNAISWASAGTVGFKGSRKSTPFAAQMAAEAAAKQAMEHGLREVECYVKGPGAGREAAIRSLQAAGLEVSVIKDVTPIPHNGCRPPKRRRV.

It belongs to the universal ribosomal protein uS11 family. As to quaternary structure, part of the 30S ribosomal subunit. Interacts with proteins S7 and S18. Binds to IF-3.

In terms of biological role, located on the platform of the 30S subunit, it bridges several disparate RNA helices of the 16S rRNA. Forms part of the Shine-Dalgarno cleft in the 70S ribosome. This Moorella thermoacetica (strain ATCC 39073 / JCM 9320) protein is Small ribosomal subunit protein uS11.